We begin with the raw amino-acid sequence, 96 residues long: MSQTVWLDGEDVVLRLYIQPKASRDKILGLHGDELKIAITAPPVDGKANGHLTKLLGKWFKVAKSLVTIEKGELGRHKQVRVHTPQQIPDEVKAIL.

This sequence belongs to the UPF0235 family.

The chain is UPF0235 protein VV1_1522 from Vibrio vulnificus (strain CMCP6).